Here is a 410-residue protein sequence, read N- to C-terminus: Multidrug resistance protein MdtA (410 aa).

A signal peptide spans 1 to 21 (MNNRYPVMKKGLIVLVVIAVA). The disordered stretch occupies residues 36 to 56 (SDGDLSGQSAHGKRGNGAHKP).

Belongs to the membrane fusion protein (MFP) (TC 8.A.1) family. In terms of assembly, part of a tripartite efflux system composed of MdtA, MdtB and MdtC.

It localises to the cell inner membrane. The polypeptide is Multidrug resistance protein MdtA (Pantoea ananatis (strain AJ13355)).